Reading from the N-terminus, the 246-residue chain is Endonuclease V (246 aa).

The Mg(2+) site is built by D50 and D120.

The protein belongs to the endonuclease V family. Mg(2+) serves as cofactor.

It is found in the cytoplasm. It carries out the reaction Endonucleolytic cleavage at apurinic or apyrimidinic sites to products with a 5'-phosphate.. DNA repair enzyme involved in the repair of deaminated bases. Selectively cleaves double-stranded DNA at the second phosphodiester bond 3' to a deoxyinosine leaving behind the intact lesion on the nicked DNA. In Gloeobacter violaceus (strain ATCC 29082 / PCC 7421), this protein is Endonuclease V.